The chain runs to 28 residues: Ranatuerin-2SEc (28 aa).

Cys-23 and Cys-28 are joined by a disulfide.

As to expression, expressed by the skin glands.

It is found in the secreted. Functionally, mast cell degranulating peptide. Causes histamine release from rat peritoneal mast cells in vitro. Has antibacterial activity against the Gram-negative bacterium E.coli K12 and Gram-positive bacterium M.luteus NCT C2665. This is Ranatuerin-2SEc from Lithobates sevosus (Dusky gopher frog).